Consider the following 162-residue polypeptide: 2-C-methyl-D-erythritol 2,4-cyclodiphosphate synthase (162 aa).

The a divalent metal cation site is built by D10 and H12. Residues 10 to 12 (DVH) and 36 to 37 (HS) each bind 4-CDP-2-C-methyl-D-erythritol 2-phosphate. H44 is a binding site for a divalent metal cation. 4-CDP-2-C-methyl-D-erythritol 2-phosphate contacts are provided by residues 58-60 (DIG), 63-67 (FSDTD), and R144.

It belongs to the IspF family. In terms of assembly, homotrimer. Requires a divalent metal cation as cofactor.

It carries out the reaction 4-CDP-2-C-methyl-D-erythritol 2-phosphate = 2-C-methyl-D-erythritol 2,4-cyclic diphosphate + CMP. The protein operates within isoprenoid biosynthesis; isopentenyl diphosphate biosynthesis via DXP pathway; isopentenyl diphosphate from 1-deoxy-D-xylulose 5-phosphate: step 4/6. Involved in the biosynthesis of isopentenyl diphosphate (IPP) and dimethylallyl diphosphate (DMAPP), two major building blocks of isoprenoid compounds. Catalyzes the conversion of 4-diphosphocytidyl-2-C-methyl-D-erythritol 2-phosphate (CDP-ME2P) to 2-C-methyl-D-erythritol 2,4-cyclodiphosphate (ME-CPP) with a corresponding release of cytidine 5-monophosphate (CMP). The polypeptide is 2-C-methyl-D-erythritol 2,4-cyclodiphosphate synthase (Burkholderia mallei (strain NCTC 10247)).